Reading from the N-terminus, the 394-residue chain is Methane monooxygenase component A beta chain (394 aa).

In terms of assembly, m.trichosporium has two forms of methane monooxygenase, a soluble and a membrane-bound type. The soluble type consists of four components (A to D): protein A, comprising three chains, in an alpha-2, beta-2, gamma-2 configuration, is a nonheme iron protein containing an unusual mu-hydroxo bridge structure at its active site and interacts with both oxygen and methane.

It carries out the reaction methane + NADH + O2 + H(+) = methanol + NAD(+) + H2O. The enzyme catalyses methane + NADPH + O2 + H(+) = methanol + NADP(+) + H2O. In terms of biological role, responsible for the initial oxygenation of methane to methanol in methanotrophs. It also catalyzes the monohydroxylation of a variety of unactivated alkenes, alicyclic, aromatic and heterocyclic compounds. The chain is Methane monooxygenase component A beta chain (mmoY) from Methylosinus trichosporium.